The chain runs to 418 residues: Glutamyl-tRNA reductase (418 aa).

Substrate-binding positions include 49 to 52 (TCNR), serine 109, 114 to 116 (EPQ), and glutamine 120. Cysteine 50 acts as the Nucleophile in catalysis. 189–194 (GAGETI) lines the NADP(+) pocket.

This sequence belongs to the glutamyl-tRNA reductase family. Homodimer.

The enzyme catalyses (S)-4-amino-5-oxopentanoate + tRNA(Glu) + NADP(+) = L-glutamyl-tRNA(Glu) + NADPH + H(+). The protein operates within porphyrin-containing compound metabolism; protoporphyrin-IX biosynthesis; 5-aminolevulinate from L-glutamyl-tRNA(Glu): step 1/2. Functionally, catalyzes the NADPH-dependent reduction of glutamyl-tRNA(Glu) to glutamate 1-semialdehyde (GSA). This is Glutamyl-tRNA reductase from Salmonella heidelberg (strain SL476).